The chain runs to 153 residues: Ribosome maturation factor RimP (153 aa).

It belongs to the RimP family.

Its subcellular location is the cytoplasm. Functionally, required for maturation of 30S ribosomal subunits. This Clostridium botulinum (strain Langeland / NCTC 10281 / Type F) protein is Ribosome maturation factor RimP.